We begin with the raw amino-acid sequence, 710 residues long: Solute carrier family 15 member 1 (710 aa).

Residues 1–21 (MGMSKSRGCFGYPLSIFFIVV) form a helical membrane-spanning segment. Residues 22–53 (NEFCERFSYYGMRALLVLYFRNFLGWDDDLST) lie on the Extracellular side of the membrane. A helical membrane pass occupies residues 54 to 74 (AIYHTFVALCYLTPILGALIA). The Cytoplasmic segment spans residues 75 to 82 (DSWLGKFK). A helical membrane pass occupies residues 83–103 (TIVSLSIVYTIGQAVISVSSI). Residues 104–118 (NDLTDHDHDGSPNNL) lie on the Extracellular side of the membrane. The chain crosses the membrane as a helical span at residues 119–139 (PLHVALSMIGLALIALGTGGI). The Cytoplasmic segment spans residues 140–161 (KPCVSAFGGDQFEEGQEKQRNR). Residues 162–182 (FFSIFYLAINAGSLLSTIITP) form a helical membrane-spanning segment. At 183–198 (ILRVQQCGIHSQQACY) the chain is on the extracellular side. Residues 199 to 219 (PLAFGVPAALMAVALIVFVLG) form a helical membrane-spanning segment. The Cytoplasmic segment spans residues 220 to 276 (SGMYKKFQPQGNIMGKVAKCIRFAIKNRFRHRSKAFPKRNHWLDWAKEKYDERLISQ). The chain crosses the membrane as a helical span at residues 277–297 (IKIMTKVMFLYIPLPMFWALF). At 298–327 (DQQGSRWTLQATTMTGKIGTIEIQPDQMQT) the chain is on the extracellular side. The helical transmembrane segment at 328 to 348 (VNAILIVIMVPIVDAVVYPLI) threads the bilayer. The Cytoplasmic portion of the chain corresponds to 349 to 361 (AKCGFNFTSLKKM). A helical membrane pass occupies residues 362–382 (TVGMFLASMAFVVAAIVQVEI). The Extracellular segment spans residues 383–586 (DKTLPVFPSG…PPNTVNMALQ (204 aa)). The segment at 383 to 586 (DKTLPVFPSG…PPNTVNMALQ (204 aa)) is extracellular domain (ECD). N-linked (GlcNAc...) asparagine glycosylation is found at asparagine 415, asparagine 439, asparagine 510, asparagine 532, and asparagine 539. The chain crosses the membrane as a helical span at residues 587–607 (IPQYFLLTCGEVVFSVTGLEF). Residues 608–621 (SYSQAPSNMKSVLQ) are Cytoplasmic-facing. Residues 622–642 (AGWLLTVAIGNIIVLIVAEAG) traverse the membrane as a helical segment. Residues 643 to 647 (HFDKQ) are Extracellular-facing. Residues 648–668 (WAEYVLFASLLLVVCIIFAIM) traverse the membrane as a helical segment. At 669 to 710 (ARFYTYINPAEIEAQFDEDEKKKGVGKENPYSSLEPVSQTNM) the chain is on the cytoplasmic side. The disordered stretch occupies residues 687–710 (DEKKKGVGKENPYSSLEPVSQTNM). Residues 698-710 (PYSSLEPVSQTNM) are compositionally biased toward polar residues.

This sequence belongs to the major facilitator superfamily. Proton-dependent oligopeptide transporter (POT/PTR) (TC 2.A.17) family. Interacts (via extracellular domain region) with trypsin. In terms of tissue distribution, highly expressed in small intestine. Expression is restricted to pinealocytes.

Its subcellular location is the apical cell membrane. The catalysed reaction is a dipeptide(out) + H(+)(out) = a dipeptide(in) + H(+)(in). The enzyme catalyses an L-amino acid tripeptide(out) + H(+)(out) = an L-amino acid tripeptide(in) + H(+)(in). It catalyses the reaction L-alanyl-L-lysine(out) + H(+)(out) = L-alanyl-L-lysine(in) + H(+)(in). It carries out the reaction L-alanyl-L-proline(out) + H(+)(out) = L-alanyl-L-proline(in) + H(+)(in). The catalysed reaction is L-alanyl-L-valine(out) + H(+)(out) = L-alanyl-L-valine(in) + H(+)(in). The enzyme catalyses carnosine(out) + H(+)(out) = carnosine(in) + H(+)(in). It catalyses the reaction glycyl-L-glutamine(out) + H(+)(out) = glycyl-L-glutamine(in) + H(+)(in). It carries out the reaction glycyl-L-leucine(out) + H(+)(out) = glycyl-L-leucine(in) + H(+)(in). The catalysed reaction is glycyl-L-proline(out) + H(+)(out) = glycyl-L-proline(in) + H(+)(in). The enzyme catalyses glycyl-sarcosine(out) + H(+)(out) = glycyl-sarcosine(in) + H(+)(in). It catalyses the reaction L-leucyl-L-leucine(out) + H(+)(out) = L-leucyl-L-leucine(in) + H(+)(in). It carries out the reaction L-leucyl-L-proline(out) + H(+)(out) = L-leucyl-L-proline(in) + H(+)(in). The catalysed reaction is L-phenylalanyl-L-leucine(out) + H(+)(out) = L-phenylalanyl-L-leucine(in) + H(+)(in). The enzyme catalyses L-phenylalanyl-L-phenylalanine(out) + H(+)(out) = L-phenylalanyl-L-phenylalanine(in) + H(+)(in). It catalyses the reaction L-lysyl-glycine(out) + H(+)(out) = L-lysyl-glycine(in) + H(+)(in). It carries out the reaction L-tyrosylglycine(out) + H(+)(out) = L-tyrosylglycine(in) + H(+)(in). The catalysed reaction is L-alanyl-L-aspartate(out) + 2 H(+)(out) = L-alanyl-L-aspartate(in) + 2 H(+)(in). The enzyme catalyses L-aspartyl-glycine(out) + 2 H(+)(out) = L-aspartyl-glycine(in) + 2 H(+)(in). It catalyses the reaction glycyl-L-aspartate(out) + 2 H(+)(out) = glycyl-L-aspartate(in) + 2 H(+)(in). It carries out the reaction glycyl-L-glutamate(out) + 2 H(+)(out) = glycyl-L-glutamate(in) + 2 H(+)(in). The catalysed reaction is L-alanyl-L-leucyl-L-alanine(out) + H(+)(out) = L-alanyl-L-leucyl-L-alanine(in) + H(+)(in). The enzyme catalyses L-alanyl-L-prolylglycine(out) + H(+)(out) = L-alanyl-L-prolylglycine(in) + H(+)(in). It catalyses the reaction glycylglycyl-L-isoleucine(out) + H(+)(out) = glycylglycyl-L-isoleucine(in) + H(+)(in). It carries out the reaction glycylglycyl-L-proline(out) + H(+)(out) = glycylglycyl-L-proline(in) + H(+)(in). The catalysed reaction is L-methionyl-L-phenylalanyl-L-methionine(out) + H(+)(out) = L-methionyl-L-phenylalanyl-L-methionine(in) + H(+)(in). The enzyme catalyses N-acetyl-D-muramoyl-L-alanyl-D-isoglutamine(out) + 2 H(+)(out) = N-acetyl-D-muramoyl-L-alanyl-D-isoglutamine(in) + 2 H(+)(in). It catalyses the reaction N(alpha)-formyl-L-methionyl-L-leucyl-L-phenylalanine(out) + 2 H(+)(out) = N(alpha)-formyl-L-methionyl-L-leucyl-L-phenylalanine(in) + 2 H(+)(in). In terms of biological role, electrogenic proton-coupled amino-acid transporter that transports oligopeptides of 2 to 4 amino acids with a preference for dipeptides. Transports neutral and monovalently charged peptides with a proton to peptide stoichiometry of 1:1 or 2:1. Primarily responsible for the absorption of dietary di- and tripeptides from the small intestinal lumen. Mediates transepithelial transport of muramyl and N-formylated bacterial dipeptides contributing to recognition of pathogenic bacteria by the mucosal immune system. This chain is Solute carrier family 15 member 1 (Slc15a1), found in Rattus norvegicus (Rat).